We begin with the raw amino-acid sequence, 375 residues long: Cinnamyl alcohol dehydrogenase 3 (375 aa).

Cysteine 44 contacts Zn(2+). Serine 46 provides a ligand contact to NADP(+). Zn(2+) contacts are provided by histidine 66, glutamate 67, cysteine 97, cysteine 100, cysteine 103, cysteine 111, and cysteine 160. Residues threonine 164, glycine 186–glycine 191, serine 209–lysine 214, threonine 249, glycine 273, and serine 296–isoleucine 298 contribute to the NADP(+) site.

The protein belongs to the zinc-containing alcohol dehydrogenase family. In terms of assembly, homodimer. Zn(2+) serves as cofactor. As to expression, expressed in the root tips. Expressed in the apical meristematic regions, leaf veins and at the base of the trichomes. Expressed at the base of the stems. Expressed in the abscission zones of newly formed siliques.

The catalysed reaction is (E)-cinnamyl alcohol + NADP(+) = (E)-cinnamaldehyde + NADPH + H(+). The enzyme catalyses (E)-coniferol + NADP(+) = (E)-coniferaldehyde + NADPH + H(+). It catalyses the reaction (E)-sinapyl alcohol + NADP(+) = (E)-sinapaldehyde + NADPH + H(+). It carries out the reaction (E)-4-coumaroyl alcohol + NADP(+) = (E)-4-coumaraldehyde + NADPH + H(+). The catalysed reaction is (E)-caffeyl alcohol + NADP(+) = (E)-caffeyl aldehyde + NADPH + H(+). It functions in the pathway aromatic compound metabolism; phenylpropanoid biosynthesis. Functionally, involved in lignin biosynthesis. Catalyzes the final step specific for the production of lignin monomers. Catalyzes the NADPH-dependent reduction of coniferaldehyde, 5-hydroxyconiferaldehyde, sinapaldehyde, 4-coumaraldehyde and caffeyl aldehyde to their respective alcohols. In Arabidopsis thaliana (Mouse-ear cress), this protein is Cinnamyl alcohol dehydrogenase 3.